The primary structure comprises 295 residues: Glutenin, low molecular weight subunit PTDUCD1 (295 aa).

Positions 1–20 (MKTFLVFALLAVVATSTIAQ) are cleaved as a signal peptide. Residues 30–61 (ERPWQEQPLPPQHTLFPQQQPFPQQQQPPFSQ) are disordered. The span at 41 to 61 (QHTLFPQQQPFPQQQQPPFSQ) shows a compositional bias: low complexity.

This sequence belongs to the gliadin/glutenin family. In terms of assembly, disulfide-bridge linked aggregates.

Functionally, glutenins are high-molecular weight seed storage proteins of wheat endosperm. Thought to be responsible for the visco-elastic property of wheat dough. This chain is Glutenin, low molecular weight subunit PTDUCD1, found in Triticum aestivum (Wheat).